The following is a 467-amino-acid chain: MPTSDPGLRRVTVHAGAQAVDLTLPAAVPVATLIPSIVDILGDRGASPATAARYQLSALGAPALPNATTLAQCGIRDGAVLVLHKSSAQPPTPRCDDVAEAVAAALDTTARPQCQRTTRLSGALAASCITAGGGLMLVRNALGTNVTRYSDATAGVVAAAGLAALLFAVIACRTYRDPIAGLTLSVIATIFGAVAGLLAVPGVPGVHSVLVAAMAAAATSVLAMRITGCGGITLTAVACCAVVVAAATLVGAITAAPVPAIGSLATLASFGLLEVSARMAVLLAGLSPRLPPALNPDDADALPTTDRLTTRANRADAWLTSLLAAFAASATIGAIGTAVATHGIHRSSMGGIALAAVTGALLLLRARSADTRRSLVFAICGITTVATAFTVAADRALEHGPWIAALTAMLAAVAMFLGFVAPALSLSPVTYRTIELLECLALIAMVPLTAWLCGAYSAVRHLDLTWT.

Helical transmembrane passes span 122-142 (GALAASCITAGGGLMLVRNAL), 152-172 (ATAGVVAAAGLAALLFAVIAC), 186-206 (VIATIFGAVAGLLAVPGVPGV), 209-229 (VLVAAMAAAATSVLAMRITGC), 241-261 (AVVVAAATLVGAITAAPVPAI), 264-284 (LATLASFGLLEVSARMAVLLA), 319-339 (LTSLLAAFAASATIGAIGTAV), 344-364 (IHRSSMGGIALAAVTGALLLL), 374-394 (SLVFAICGITTVATAFTVAAD), 401-421 (PWIAALTAMLAAVAMFLGFVA), and 439-459 (CLALIAMVPLTAWLCGAYSAV).

This sequence belongs to the EccD/Snm4 family. Part of the ESX-4 / type VII secretion system (T7SS), which is composed of cytosolic and membrane components.

It localises to the cell membrane. This chain is ESX-4 secretion system protein eccD4 (eccD4), found in Mycobacterium tuberculosis (strain CDC 1551 / Oshkosh).